A 74-amino-acid chain; its full sequence is MTKNKNVIEVEGKVVECLRSAMFTVELENGHQVLAHISGKIRKNYIKIMLEDRVLVELPPYDLTRGRIVFRYRN.

Positions 1 to 73 (MTKNKNVIEV…TRGRIVFRYR (73 aa)) constitute an S1-like domain.

This sequence belongs to the IF-1 family. In terms of assembly, component of the 30S ribosomal translation pre-initiation complex which assembles on the 30S ribosome in the order IF-2 and IF-3, IF-1 and N-formylmethionyl-tRNA(fMet); mRNA recruitment can occur at any time during PIC assembly.

The protein localises to the cytoplasm. Functionally, one of the essential components for the initiation of protein synthesis. Stabilizes the binding of IF-2 and IF-3 on the 30S subunit to which N-formylmethionyl-tRNA(fMet) subsequently binds. Helps modulate mRNA selection, yielding the 30S pre-initiation complex (PIC). Upon addition of the 50S ribosomal subunit IF-1, IF-2 and IF-3 are released leaving the mature 70S translation initiation complex. The chain is Translation initiation factor IF-1 2 from Streptomyces avermitilis (strain ATCC 31267 / DSM 46492 / JCM 5070 / NBRC 14893 / NCIMB 12804 / NRRL 8165 / MA-4680).